Reading from the N-terminus, the 261-residue chain is Putative carbamate hydrolase RutD (261 aa).

The 106-residue stretch at Pro14 to Pro119 folds into the AB hydrolase-1 domain.

It belongs to the AB hydrolase superfamily. Hydrolase RutD family.

It catalyses the reaction carbamate + 2 H(+) = NH4(+) + CO2. Involved in pyrimidine catabolism. May facilitate the hydrolysis of carbamate, a reaction that can also occur spontaneously. This is Putative carbamate hydrolase RutD from Agrobacterium fabrum (strain C58 / ATCC 33970) (Agrobacterium tumefaciens (strain C58)).